The following is a 251-amino-acid chain: Enolase-phosphatase E1 (251 aa).

The Mg(2+) site is built by aspartate 13 and glutamate 15. Residues 137 to 138 (SS) and lysine 183 each bind substrate. Residue aspartate 210 participates in Mg(2+) binding.

Belongs to the HAD-like hydrolase superfamily. MasA/MtnC family. In terms of assembly, monomer. Mg(2+) is required as a cofactor.

It localises to the cytoplasm. Its subcellular location is the nucleus. The enzyme catalyses 5-methylsulfanyl-2,3-dioxopentyl phosphate + H2O = 1,2-dihydroxy-5-(methylsulfanyl)pent-1-en-3-one + phosphate. The protein operates within amino-acid biosynthesis; L-methionine biosynthesis via salvage pathway; L-methionine from S-methyl-5-thio-alpha-D-ribose 1-phosphate: step 3/6. It participates in amino-acid biosynthesis; L-methionine biosynthesis via salvage pathway; L-methionine from S-methyl-5-thio-alpha-D-ribose 1-phosphate: step 4/6. Functionally, bifunctional enzyme that catalyzes the enolization of 2,3-diketo-5-methylthiopentyl-1-phosphate (DK-MTP-1-P) into the intermediate 2-hydroxy-3-keto-5-methylthiopentenyl-1-phosphate (HK-MTPenyl-1-P), which is then dephosphorylated to form the acireductone 1,2-dihydroxy-3-keto-5-methylthiopentene (DHK-MTPene). This Candida glabrata (strain ATCC 2001 / BCRC 20586 / JCM 3761 / NBRC 0622 / NRRL Y-65 / CBS 138) (Yeast) protein is Enolase-phosphatase E1.